Consider the following 162-residue polypeptide: NADH-quinone oxidoreductase subunit C (162 aa).

This sequence belongs to the complex I 30 kDa subunit family. In terms of assembly, NDH-1 is composed of 14 different subunits. Subunits NuoB, C, D, E, F, and G constitute the peripheral sector of the complex.

The protein localises to the cell inner membrane. It carries out the reaction a quinone + NADH + 5 H(+)(in) = a quinol + NAD(+) + 4 H(+)(out). In terms of biological role, NDH-1 shuttles electrons from NADH, via FMN and iron-sulfur (Fe-S) centers, to quinones in the respiratory chain. The immediate electron acceptor for the enzyme in this species is believed to be ubiquinone. Couples the redox reaction to proton translocation (for every two electrons transferred, four hydrogen ions are translocated across the cytoplasmic membrane), and thus conserves the redox energy in a proton gradient. This chain is NADH-quinone oxidoreductase subunit C, found in Trichlorobacter lovleyi (strain ATCC BAA-1151 / DSM 17278 / SZ) (Geobacter lovleyi).